The sequence spans 7311 residues: MAM and LDL-receptor class A domain-containing protein 2 (7311 aa).

MAM domains follow at residues 4-171 (AYCD…SCVT), 199-361 (LDCD…FCSP), 363-530 (KQCT…VCPP), 532-695 (GDCN…NCPV), 727-887 (YDCT…QCPV), 889-1050 (MQCS…ACPL), 1052-1220 (GDCT…RCRL), 1228-1392 (FDCN…SCPS), 1394-1557 (GMCS…SCPA), 1559-1722 (GDCS…NCIQ), 1755-1918 (NDCN…KCPS), 1920-2087 (TDCT…PCPL), 2089-2254 (GDCD…RCSV), 2274-2437 (NNCT…PCPP), 2439-2601 (TVCD…PCPP), and 2603-2771 (GSCD…YCVG). Positions 2461 to 2481 (WKRDSGGTPSAGTGPSRDHTT) are disordered. The segment covering 2466–2475 (GGTPSAGTGP) has biased composition (low complexity). P-type domains follow at residues 2771 to 2817 (GLCS…FYHP) and 2818 to 2862 (SACA…FHGP). Disulfide bonds link C2773/C2802, C2784/C2801, C2795/C2813, C2820/C2847, C2831/C2846, and C2841/C2858. MAM domains lie at 2883 to 3048 (WDCT…TCPP), 3050 to 3214 (RECD…PCPP), 3216 to 3384 (GSCD…FCPS), and 3429 to 3587 (GACT…NCTL). Residues 3593 to 3628 (SCGQQHRCIRGSCIDRGRVCDYTDDCGDNSDEQNCY) form the LDL-receptor class A 1 domain. 3 cysteine pairs are disulfide-bonded: C3594–C3605, C3600–C3618, and C3612–C3627. The MAM 21 domain maps to 3632–3794 (YRCSFEKSLC…DLSMTSSCQS (163 aa)). 2 consecutive LDL-receptor class A domains span residues 3814-3850 (PCPR…VNCG) and 4016-4054 (SCIS…STCA). 3 disulfide bridges follow: C3815-C3827, C3822-C3840, and C3834-C3849. In terms of domain architecture, MAM 22 spans 3850-4011 (GSCSFEPGLC…DDVTFQGCAL (162 aa)). Intrachain disulfides connect C4017–C4029, C4024–C4042, and C4036–C4053. An MAM 23 domain is found at 4058–4221 (ERCNFEQDLC…DVSFTPNCRP (164 aa)). Positions 4239 to 4276 (GCQPGKFKCANGGNCISVSKVCNFYSDCSGGSDEMNCP) constitute an LDL-receptor class A 4 domain. Cystine bridges form between C4240–C4253, C4247–C4266, and C4260–C4275. Residues 4277–4438 (ATCNFQNSFC…DDVSFEHCAE (162 aa)) form the MAM 24 domain. Positions 4444-4483 (TCSGLSVFRCQSGHCIAMSGKCDFEPDCCDGSEETNIVCA) constitute an LDL-receptor class A 5 domain. Cystine bridges form between C4445-C4458, C4453-C4471, and C4465-C4482. An MAM 25 domain is found at 4486–4646 (NRCNFEAGLC…DISFTPDCVV (161 aa)). LDL-receptor class A domains follow at residues 4660–4699 (PTQP…DLCG) and 4859–4899 (YCSG…QSCS). 5 disulfide bridges follow: C4668-C4687, C4681-C4698, C4860-C4876, C4871-C4889, and C4883-C4898. Positions 4700-4862 (WPCDFQRGTC…NNYTLTYCSG (163 aa)) constitute an MAM 26 domain. One can recognise an MAM 27 domain in the interval 4903-5063 (SRCTFENGLC…SIAMKPSCQQ (161 aa)). Residues 5085–5122 (NCVLPQVPCVSDGKCVSPSQVCDFNLDCADASDERSCP) enclose the LDL-receptor class A 8 domain. 3 cysteine pairs are disulfide-bonded: C5086–C5099, C5093–C5112, and C5106–C5121. The 159-residue stretch at 5123–5281 (HMCTFESDQC…DDIKFVDCAL (159 aa)) folds into the MAM 28 domain. One can recognise an LDL-receptor class A 9 domain in the interval 5287–5322 (SCPSQFTCARNSCVSNDYVCDFNDDCGDGSDETLCG). Intrachain disulfides connect C5288–C5299, C5294–C5312, and C5306–C5321. Residues 5326–5489 (TRCDFSRGSC…DVSFTTGCKQ (164 aa)) enclose the MAM 29 domain. The LDL-receptor class A 10 domain occupies 5513–5552 (QCTTAEFNCFNQGSGACIPSTQVCNFQPNCNDGVDEQNCA). 3 disulfide bridges follow: C5514–C5529, C5521–C5542, and C5536–C5551. The region spanning 5554–5719 (TKCSFDGGDF…DDIEFLNCVP (166 aa)) is the MAM 30 domain. In terms of domain architecture, LDL-receptor class A 11 spans 5725 to 5763 (KCTADEFQCARGGCIPKTSVCDFKADCMVGDVSDESSCS). 3 disulfides stabilise this stretch: C5726–C5738, C5733–C5751, and C5745–C5762. The 168-residue stretch at 5768 to 5935 (GQCDFEHGLC…LTPGCQICTD (168 aa)) folds into the MAM 31 domain. Residues 5957 to 5993 (PCSLQQYVCKNLRCVDKAQICNFKDDCGDNSDELPCG) enclose the LDL-receptor class A 12 domain. 3 disulfides stabilise this stretch: C5958/C5970, C5965/C5983, and C5977/C5992. Residues 5994-6156 (SNCTFEGDCY…DISFTDNCFV (163 aa)) enclose the MAM 32 domain. The interval 6014–6034 (NFHWRRRNGKTPSVGTGPTND) is disordered. Positions 6023 to 6034 (KTPSVGTGPTND) are enriched in polar residues. In terms of domain architecture, LDL-receptor class A 13 spans 6161–6200 (TCTPNEVKCRTSGHCVAEQRVCDHVKDCNDGTDEDALICS). Intrachain disulfides connect C6162/C6175, C6169/C6188, and C6182/C6199. Residues 6204–6365 (ASCDFDVNWC…DISFSAGCYK (162 aa)) form the MAM 33 domain. In terms of domain architecture, LDL-receptor class A 14 spans 6377–6414 (RCSKVQFYCKADDLCINIHWKCDGEKDCTDGADEMLCP). 3 disulfides stabilise this stretch: C6378–C6391, C6385–C6404, and C6398–C6413. 4 MAM domains span residues 6430–6590 (ANCN…NCAK), 6606–6779 (LDED…NCDF), 6808–6965 (GDCT…QCQF), and 7173–7311 (GSCN…YNNL).

As to expression, component of the acid-insoluble and acid-soluble organic matrix of the aragonitic skeleton (at protein level).

The protein localises to the secreted. In Acropora millepora (Staghorn coral), this protein is MAM and LDL-receptor class A domain-containing protein 2.